The following is a 352-amino-acid chain: Ion-translocating oxidoreductase complex subunit D (352 aa).

5 consecutive transmembrane segments (helical) span residues 20-40 (IMLL…WFFG), 42-62 (GTLV…ALVL), 78-109 (ALLT…VIIA), 123-143 (PAMI…TSWL), and 148-168 (IAVN…GHTA). T187 bears the FMN phosphoryl threonine mark. A run of 5 helical transmembrane segments spans residues 214–234 (ILAG…GVWL), 242–262 (WHIP…GWLF), 267–287 (LAAP…FFIL), 301–321 (LIFG…GGYP), and 322–342 (DGVA…DYYT).

This sequence belongs to the NqrB/RnfD family. In terms of assembly, the complex is composed of six subunits: RsxA, RsxB, RsxC, RsxD, RsxE and RsxG. It depends on FMN as a cofactor.

The protein resides in the cell inner membrane. Its function is as follows. Part of a membrane-bound complex that couples electron transfer with translocation of ions across the membrane. Required to maintain the reduced state of SoxR. The chain is Ion-translocating oxidoreductase complex subunit D from Escherichia coli O157:H7.